The chain runs to 582 residues: Aspartate--tRNA ligase (582 aa).

E174 is an L-aspartate binding site. Residues 198-201 form an aspartate region; the sequence is QITK. R220 is a binding site for L-aspartate. ATP is bound by residues 220 to 222 and Q229; that span reads RDE. Residue H443 coordinates L-aspartate. Residue E477 participates in ATP binding. R484 is an L-aspartate binding site. 529 to 532 lines the ATP pocket; sequence GLDR.

Belongs to the class-II aminoacyl-tRNA synthetase family. Type 1 subfamily. As to quaternary structure, homodimer.

Its subcellular location is the cytoplasm. The catalysed reaction is tRNA(Asp) + L-aspartate + ATP = L-aspartyl-tRNA(Asp) + AMP + diphosphate. Functionally, catalyzes the attachment of L-aspartate to tRNA(Asp) in a two-step reaction: L-aspartate is first activated by ATP to form Asp-AMP and then transferred to the acceptor end of tRNA(Asp). The chain is Aspartate--tRNA ligase from Streptococcus pyogenes serotype M5 (strain Manfredo).